The primary structure comprises 343 residues: Undecaprenyl-diphosphatase 2 (343 aa).

Transmembrane regions (helical) follow at residues 21–41, 57–77, 104–124, and 129–149; these read LFPV…GGSW, PYLT…LVFF, LAWL…ALEH, and LFAK…ILLA. Residues 179–193 are compositionally biased toward low complexity; sequence VPAPATVPTQTTSAP. The interval 179-202 is disordered; it reads VPAPATVPTQTTSAPGGRATARHT. The next 4 membrane-spanning stretches (helical) occupy residues 225–245, 265–285, 294–314, and 322–342; these read AGVI…RSGI, FLLA…ALAG, QVIL…RFLV, and LTPF…RFAI.

The protein belongs to the UppP family.

It localises to the cell membrane. The enzyme catalyses di-trans,octa-cis-undecaprenyl diphosphate + H2O = di-trans,octa-cis-undecaprenyl phosphate + phosphate + H(+). Catalyzes the dephosphorylation of undecaprenyl diphosphate (UPP). Confers resistance to bacitracin. The protein is Undecaprenyl-diphosphatase 2 of Frankia alni (strain DSM 45986 / CECT 9034 / ACN14a).